Reading from the N-terminus, the 128-residue chain is Fluoride-specific ion channel FluC (128 aa).

4 helical membrane-spanning segments follow: residues 5–25, 34–54, 67–87, and 99–119; these read LFIS…GLLF, FGTL…LGLF, FLIT…SEVV, and FCVL…GIWI. Na(+)-binding residues include Gly-74 and Thr-77.

Belongs to the fluoride channel Fluc/FEX (TC 1.A.43) family.

Its subcellular location is the cell inner membrane. It catalyses the reaction fluoride(in) = fluoride(out). Its activity is regulated as follows. Na(+) is not transported, but it plays an essential structural role and its presence is essential for fluoride channel function. Its function is as follows. Fluoride-specific ion channel. Important for reducing fluoride concentration in the cell, thus reducing its toxicity. This Haemophilus influenzae (strain PittGG) protein is Fluoride-specific ion channel FluC.